The following is a 308-amino-acid chain: Aspartate carbamoyltransferase catalytic subunit (308 aa).

Positions 55 and 56 each coordinate carbamoyl phosphate. Lys-83 contributes to the L-aspartate binding site. Carbamoyl phosphate contacts are provided by Arg-105, His-133, and Gln-136. Residues Arg-166 and Arg-223 each coordinate L-aspartate. Carbamoyl phosphate contacts are provided by Gly-264 and Pro-265.

The protein belongs to the aspartate/ornithine carbamoyltransferase superfamily. ATCase family. Heterododecamer (2C3:3R2) of six catalytic PyrB chains organized as two trimers (C3), and six regulatory PyrI chains organized as three dimers (R2).

The catalysed reaction is carbamoyl phosphate + L-aspartate = N-carbamoyl-L-aspartate + phosphate + H(+). It functions in the pathway pyrimidine metabolism; UMP biosynthesis via de novo pathway; (S)-dihydroorotate from bicarbonate: step 2/3. Functionally, catalyzes the condensation of carbamoyl phosphate and aspartate to form carbamoyl aspartate and inorganic phosphate, the committed step in the de novo pyrimidine nucleotide biosynthesis pathway. In Salinispora tropica (strain ATCC BAA-916 / DSM 44818 / JCM 13857 / NBRC 105044 / CNB-440), this protein is Aspartate carbamoyltransferase catalytic subunit.